A 509-amino-acid chain; its full sequence is Bifunctional purine biosynthesis protein PurH (509 aa).

In terms of domain architecture, MGS-like spans 1–144 (MKRALISVSD…KNYAAVTVVV (144 aa)).

The protein belongs to the PurH family.

The enzyme catalyses (6R)-10-formyltetrahydrofolate + 5-amino-1-(5-phospho-beta-D-ribosyl)imidazole-4-carboxamide = 5-formamido-1-(5-phospho-D-ribosyl)imidazole-4-carboxamide + (6S)-5,6,7,8-tetrahydrofolate. It carries out the reaction IMP + H2O = 5-formamido-1-(5-phospho-D-ribosyl)imidazole-4-carboxamide. The protein operates within purine metabolism; IMP biosynthesis via de novo pathway; 5-formamido-1-(5-phospho-D-ribosyl)imidazole-4-carboxamide from 5-amino-1-(5-phospho-D-ribosyl)imidazole-4-carboxamide (10-formyl THF route): step 1/1. Its pathway is purine metabolism; IMP biosynthesis via de novo pathway; IMP from 5-formamido-1-(5-phospho-D-ribosyl)imidazole-4-carboxamide: step 1/1. This Listeria monocytogenes serotype 4b (strain F2365) protein is Bifunctional purine biosynthesis protein PurH.